Here is a 260-residue protein sequence, read N- to C-terminus: UPF0294 protein YE0917 (260 aa).

This sequence belongs to the UPF0294 family.

The protein localises to the cytoplasm. The polypeptide is UPF0294 protein YE0917 (Yersinia enterocolitica serotype O:8 / biotype 1B (strain NCTC 13174 / 8081)).